Here is a 285-residue protein sequence, read N- to C-terminus: Putative sugar uptake protein lmo0169 (285 aa).

The next 10 helical transmembrane spans lie at 5–24 (IALI…SKIG), 31–48 (IIGT…VFIF), 53–71 (YTAT…WSLG), 84–106 (VSKT…GVFA), 116–135 (LVLG…LTSY), 151–173 (IITL…WFDI), 178–195 (AILP…LFSI), 207–226 (WLNM…LLFS), 232–254 (IATG…ILFL), and 263–282 (LILV…MIGI).

This sequence belongs to the GRP transporter (TC 2.A.7.5) family.

The protein localises to the cell membrane. This Listeria monocytogenes serovar 1/2a (strain ATCC BAA-679 / EGD-e) protein is Putative sugar uptake protein lmo0169.